The primary structure comprises 406 residues: Ribonuclease D (406 aa).

One can recognise a 3'-5' exonuclease domain in the interval 26–193 (LITQTTDLEI…VYLLLKKQLE (168 aa)). One can recognise an HRDC domain in the interval 231–312 (KPRELAVLQK…HEGLEVDLAT (82 aa)).

This sequence belongs to the RNase D family. Requires a divalent metal cation as cofactor.

The protein localises to the cytoplasm. The enzyme catalyses Exonucleolytic cleavage that removes extra residues from the 3'-terminus of tRNA to produce 5'-mononucleotides.. Its function is as follows. Exonuclease involved in the 3' processing of various precursor tRNAs. Initiates hydrolysis at the 3'-terminus of an RNA molecule and releases 5'-mononucleotides. This Bartonella henselae (strain ATCC 49882 / DSM 28221 / CCUG 30454 / Houston 1) (Rochalimaea henselae) protein is Ribonuclease D.